Reading from the N-terminus, the 871-residue chain is Probable LRR receptor-like serine/threonine-protein kinase At1g51810 (871 aa).

A signal peptide spans 1–20 (MERHCLFFVIFSLILHLVQA). Over 21–512 (QDPIGFINLD…GRQIKSMTIP (492 aa)) the chain is Extracellular. N-linked (GlcNAc...) asparagine glycosylation is found at asparagine 93, asparagine 179, asparagine 229, asparagine 283, asparagine 295, asparagine 396, asparagine 410, asparagine 439, asparagine 458, asparagine 463, and asparagine 489. LRR repeat units follow at residues 405-426 (IITS…TIQN), 429-449 (NLQE…EFLA), and 453-474 (SLLV…KLIE). The chain crosses the membrane as a helical span at residues 513–533 (IVASIGSVVAFTVALMIFCVV). The Cytoplasmic segment spans residues 534 to 871 (RKNNPSNDEA…FGTEVAPMAR (338 aa)). Threonine 568 carries the post-translational modification Phosphothreonine. The Protein kinase domain maps to 577-850 (NNFQKILGKG…QVVFELKECL (274 aa)). ATP is bound by residues 583-591 (LGKGGFGIV) and lysine 605. Tyrosine 650 bears the Phosphotyrosine mark. The Proton acceptor role is filled by aspartate 702. Serine 736 carries the post-translational modification Phosphoserine. Phosphothreonine occurs at positions 737 and 742. Position 750 is a phosphotyrosine (tyrosine 750).

This sequence belongs to the protein kinase superfamily. Ser/Thr protein kinase family.

It localises to the membrane. The catalysed reaction is L-seryl-[protein] + ATP = O-phospho-L-seryl-[protein] + ADP + H(+). It carries out the reaction L-threonyl-[protein] + ATP = O-phospho-L-threonyl-[protein] + ADP + H(+). The polypeptide is Probable LRR receptor-like serine/threonine-protein kinase At1g51810 (Arabidopsis thaliana (Mouse-ear cress)).